Reading from the N-terminus, the 422-residue chain is Metallocarboxypeptidase A (422 aa).

A signal peptide spans 1–17; sequence MRSVLSLALLAANVVTA. Positions 18 to 112 are cleaved as a propeptide — activation peptide; the sequence is AVVSPFDYSG…FEAYSAGYAP (95 aa). A Peptidase M14 domain is found at 119-419; sequence SYHSYQDHIS…AGTVAMLKAV (301 aa). Residues histidine 179 and glutamate 182 each coordinate Zn(2+). Substrate-binding positions include 179 to 182, arginine 237, and 254 to 255; these read HARE and NR. Cysteine 248 and cysteine 271 form a disulfide bridge. Position 309 (histidine 309) interacts with Zn(2+). Residue 310–311 coordinates substrate; that stretch reads SY. Residue glutamate 385 is the Proton donor/acceptor of the active site.

Belongs to the peptidase M14 family. Requires Zn(2+) as cofactor.

The protein resides in the secreted. In terms of biological role, extracellular metalloprotease that contributes to pathogenicity. This is Metallocarboxypeptidase A (MCPA) from Trichophyton equinum (Horse ringworm fungus).